The following is a 431-amino-acid chain: Phosphoribosylamine--glycine ligase (431 aa).

In terms of domain architecture, ATP-grasp spans 108–315; sequence KDFLARHKIP…LVLLIEAALA (208 aa). 134–195 contributes to the ATP binding site; it reads LREKGAPIVI…EEFLDGEEAS (62 aa). Glu285 and Asn287 together coordinate Mg(2+).

The protein belongs to the GARS family. The cofactor is Mg(2+). Requires Mn(2+) as cofactor.

It catalyses the reaction 5-phospho-beta-D-ribosylamine + glycine + ATP = N(1)-(5-phospho-beta-D-ribosyl)glycinamide + ADP + phosphate + H(+). It participates in purine metabolism; IMP biosynthesis via de novo pathway; N(1)-(5-phospho-D-ribosyl)glycinamide from 5-phospho-alpha-D-ribose 1-diphosphate: step 2/2. The chain is Phosphoribosylamine--glycine ligase from Pseudomonas syringae pv. tomato (strain ATCC BAA-871 / DC3000).